The sequence spans 61 residues: Small ribosomal subunit protein uS14 (61 aa).

4 residues coordinate Zn(2+): Cys24, Cys27, Cys40, and Cys43.

It belongs to the universal ribosomal protein uS14 family. Zinc-binding uS14 subfamily. In terms of assembly, part of the 30S ribosomal subunit. Contacts proteins S3 and S10. It depends on Zn(2+) as a cofactor.

In terms of biological role, binds 16S rRNA, required for the assembly of 30S particles and may also be responsible for determining the conformation of the 16S rRNA at the A site. This chain is Small ribosomal subunit protein uS14, found in Dictyoglomus turgidum (strain DSM 6724 / Z-1310).